The following is a 209-amino-acid chain: Chaperone protein TorD (209 aa).

The protein belongs to the TorD/DmsD family. TorD subfamily.

The protein resides in the cytoplasm. Involved in the biogenesis of TorA. Acts on TorA before the insertion of the molybdenum cofactor and, as a result, probably favors a conformation of the apoenzyme that is competent for acquiring the cofactor. This chain is Chaperone protein TorD, found in Shewanella sp. (strain ANA-3).